Consider the following 684-residue polypeptide: Protein-glutamine gamma-glutamyltransferase 4 (684 aa).

Catalysis depends on residues Cys268, His327, and Asp350. Residues Asn390, Asp392, Glu442, and Glu447 each coordinate Ca(2+).

Belongs to the transglutaminase superfamily. Transglutaminase family. In terms of assembly, homodimer. Requires Ca(2+) as cofactor. In terms of tissue distribution, prostate.

It carries out the reaction L-glutaminyl-[protein] + L-lysyl-[protein] = [protein]-L-lysyl-N(6)-5-L-glutamyl-[protein] + NH4(+). In terms of biological role, associated with the mammalian reproductive process. Catalyzes the cross-linking of proteins and the conjugation of polyamines to specific proteins in the seminal tract. In Homo sapiens (Human), this protein is Protein-glutamine gamma-glutamyltransferase 4 (TGM4).